A 453-amino-acid polypeptide reads, in one-letter code: Ribosomal protein uS12 methylthiotransferase RimO (453 aa).

One can recognise an MTTase N-terminal domain in the interval 6-116 (PKVGFVSLGC…VMEAVHEALP (111 aa)). [4Fe-4S] cluster-binding residues include Cys15, Cys51, Cys80, Cys147, Cys151, and Cys154. In terms of domain architecture, Radical SAM core spans 133 to 370 (LTPRHYAYLK…MEKQAQISAA (238 aa)). In terms of domain architecture, TRAM spans 373–441 (EAKIGTVQQC…EHDLYGDALP (69 aa)).

This sequence belongs to the methylthiotransferase family. RimO subfamily. The cofactor is [4Fe-4S] cluster.

It is found in the cytoplasm. It catalyses the reaction L-aspartate(89)-[ribosomal protein uS12]-hydrogen + (sulfur carrier)-SH + AH2 + 2 S-adenosyl-L-methionine = 3-methylsulfanyl-L-aspartate(89)-[ribosomal protein uS12]-hydrogen + (sulfur carrier)-H + 5'-deoxyadenosine + L-methionine + A + S-adenosyl-L-homocysteine + 2 H(+). Its function is as follows. Catalyzes the methylthiolation of an aspartic acid residue of ribosomal protein uS12. This is Ribosomal protein uS12 methylthiotransferase RimO from Stenotrophomonas maltophilia (strain K279a).